The chain runs to 508 residues: Photosystem II CP47 reaction center protein (508 aa).

Helical transmembrane passes span 21–36 (AVHL…WAGS), 101–115 (ILLS…IWHW), 140–156 (GIHL…FGAF), 203–218 (IAAG…FHLS), 237–252 (VLSS…AFVV), and 457–472 (WFAL…HGAR).

Belongs to the PsbB/PsbC family. PsbB subfamily. As to quaternary structure, PSII is composed of 1 copy each of membrane proteins PsbA, PsbB, PsbC, PsbD, PsbE, PsbF, PsbH, PsbI, PsbJ, PsbK, PsbL, PsbM, PsbT, PsbX, PsbY, PsbZ, Psb30/Ycf12, at least 3 peripheral proteins of the oxygen-evolving complex and a large number of cofactors. It forms dimeric complexes. Binds multiple chlorophylls. PSII binds additional chlorophylls, carotenoids and specific lipids. is required as a cofactor.

The protein resides in the plastid. It localises to the chloroplast thylakoid membrane. In terms of biological role, one of the components of the core complex of photosystem II (PSII). It binds chlorophyll and helps catalyze the primary light-induced photochemical processes of PSII. PSII is a light-driven water:plastoquinone oxidoreductase, using light energy to abstract electrons from H(2)O, generating O(2) and a proton gradient subsequently used for ATP formation. This Nephroselmis olivacea (Green alga) protein is Photosystem II CP47 reaction center protein.